Consider the following 206-residue polypeptide: Guanylate kinase (206 aa).

The Guanylate kinase-like domain maps to glycine 6–aspartate 185. Glycine 13–serine 20 provides a ligand contact to ATP.

The protein belongs to the guanylate kinase family.

It localises to the cytoplasm. The catalysed reaction is GMP + ATP = GDP + ADP. Its function is as follows. Essential for recycling GMP and indirectly, cGMP. This Sulfurimonas denitrificans (strain ATCC 33889 / DSM 1251) (Thiomicrospira denitrificans (strain ATCC 33889 / DSM 1251)) protein is Guanylate kinase.